Here is a 98-residue protein sequence, read N- to C-terminus: NADH-ubiquinone oxidoreductase chain 4L (98 aa).

The next 3 membrane-spanning stretches (helical) occupy residues 1-21, 29-49, and 61-81; these read MPYIYMNITLAFVISLIGTLM, SLLCLEGMLLSLFTLNALLSL, and LILLVFAACEAAVGLALLVMI.

This sequence belongs to the complex I subunit 4L family. As to quaternary structure, core subunit of respiratory chain NADH dehydrogenase (Complex I) which is composed of 45 different subunits.

The protein localises to the mitochondrion inner membrane. It carries out the reaction a ubiquinone + NADH + 5 H(+)(in) = a ubiquinol + NAD(+) + 4 H(+)(out). Its function is as follows. Core subunit of the mitochondrial membrane respiratory chain NADH dehydrogenase (Complex I) which catalyzes electron transfer from NADH through the respiratory chain, using ubiquinone as an electron acceptor. Part of the enzyme membrane arm which is embedded in the lipid bilayer and involved in proton translocation. The protein is NADH-ubiquinone oxidoreductase chain 4L (MT-ND4L) of Elephas maximus (Indian elephant).